Consider the following 397-residue polypeptide: Proteinase-activated receptor 2 (397 aa).

A signal peptide spans methionine 1–threonine 25. Positions isoleucine 26 to arginine 36 are cleaved as a propeptide — removed for receptor activation. Residue asparagine 30 is glycosylated (N-linked (GlcNAc...) asparagine). The Extracellular portion of the chain corresponds to serine 37–glycine 71. A helical transmembrane segment spans residues lysine 72–leucine 101. Residues phenylalanine 102–histidine 108 are Cytoplasmic-facing. A helical transmembrane segment spans residues proline 109–histidine 137. The Extracellular portion of the chain corresponds to glycine 138–asparagine 149. A disulfide bridge links cysteine 148 with cysteine 226. A helical transmembrane segment spans residues valine 150 to isoleucine 177. The Cytoplasmic segment spans residues valine 178–histidine 183. The helical transmembrane segment at serine 184–valine 211 threads the bilayer. Residues valine 212 to leucine 235 are Extracellular-facing. Asparagine 222 carries N-linked (GlcNAc...) asparagine glycosylation. Residues valine 236–leucine 269 form a helical membrane-spanning segment. At arginine 270–asparagine 277 the chain is on the cytoplasmic side. A helical transmembrane segment spans residues serine 278 to glutamine 317. Residues glycine 318–tyrosine 323 lie on the Extracellular side of the membrane. The chain crosses the membrane as a helical span at residues alanine 324–valine 347. Topologically, residues serine 348–tyrosine 397 are cytoplasmic. Cysteine 361 carries the S-palmitoyl cysteine lipid modification. The segment at serine 373–tyrosine 397 is disordered. Residues serine 383 to tyrosine 397 show a composition bias toward low complexity.

It belongs to the G-protein coupled receptor 1 family. As to quaternary structure, interacts with TLR4, COPS5 and TMED2. Interacts with GNAQ, GNA11, GNA12, GNA13 and GNA14. Post-translationally, a proteolytic cleavage generates a new N-terminus that functions as a tethered ligand. Activating serine proteases include trypsin, mast cell tryptase, coagulation factors VII and Xa, myeloblastin/PRTN3 and membrane-type serine protease 1/ST14. Subsequent cleavage by serine proteases, including neutrophil elastase and cathepsin G, leads to receptor deactivation. At least in part, implicated proteases are also shown to activate the receptor; the glycosylation status of the receptor is thought to contribute to the difference. In addition to conventional trypsin-like proteases activated by other proteases and glycosidases derived from bacteria, fungi and insects. Activated by serine protease allergens such as dust mite Der p3 and Der p9 and mold Pen c13. Activated by P.gingivalis arginine-specific (trypsin-like) cysteine proteinases called gingipains. Activated by S.griseus exogenous chitinase. Activated by A.alternata aspartate protease; the cleavage generates non-conventional processed forms. Proteolytically cleaved by coagulation factor Xa (F10); cleavage results in activation of F2RL1-dependent signaling. In terms of processing, N-glycosylated and sialylated. Multiple phosphorylated on serine and threonine residues in the cytoplasmic region upon receptor activation; required for receptor desensitization and recruitment of beta-arrestin. Post-translationally, monoubiquitinated by CBL at the plasma membrane and in early endosomes; not required for receptor endocytosis but for translocation to late endosomes or lysosomes. Deubiquitination involves STAMBP and USP8; required for lysosomal trafficking and receptor degradation. Widely expressed in tissues with especially high levels in pancreas, liver, kidney, small intestine, and colon. Moderate expression is detected in many organs, but none in brain or skeletal muscle. Expressed in endothelial cells.

The protein localises to the cell membrane. With respect to regulation, activated upon interaction by mucunain, a cowhage (Mucuna pruriens) plant cysteine proteinase. Receptor for trypsin and trypsin-like enzymes coupled to G proteins. Its function is mediated through the activation of several signaling pathways including phospholipase C (PLC), intracellular calcium, mitogen-activated protein kinase (MAPK), I-kappaB kinase/NF-kappaB and Rho. Can also be transactivated by cleaved F2R/PAR1. Involved in modulation of inflammatory responses and regulation of innate and adaptive immunity, and acts as a sensor for proteolytic enzymes generated during infection. Generally is promoting inflammation. Can signal synergistically with TLR4 and probably TLR2 in inflammatory responses and modulates TLR3 signaling. Has a protective role in establishing the endothelial barrier; the activity involves coagulation factor X. Regulates endothelial cell barrier integrity during neutrophil extravasation, probably following proteolytic cleavage by PRTN3. Proposed to have a bronchoprotective role in airway epithelium, but also shown to compromise the airway epithelial barrier by interrupting E-cadherin adhesion. Involved in the regulation of vascular tone; activation results in hypotension presumably mediated by vasodilation. Associates with a subset of G proteins alpha subunits such as GNAQ, GNA11, GNA14, GNA12 and GNA13, but probably not with G(o)-alpha, G(i) subunit alpha-1 and G(i) subunit alpha-2. However, according to PubMed:21627585 can signal through G(i) subunit alpha. Believed to be a class B receptor which internalizes as a complex with arrestin and traffic with it to endosomal vesicles, presumably as desensitized receptor, for extended periods of time. Mediates inhibition of TNF-alpha stimulated JNK phosphorylation via coupling to GNAQ and GNA11; the function involves dissociation of RIPK1 and TRADD from TNFR1. Mediates phosphorylation of nuclear factor NF-kappa-B RELA subunit at 'Ser-536'; the function involves IKBKB and is predominantly independent of G proteins. Involved in cellular migration. Involved in cytoskeletal rearrangement and chemotaxis through beta-arrestin-promoted scaffolds; the function is independent of GNAQ and GNA11 and involves promotion of cofilin dephosphorylation and actin filament severing. Induces redistribution of COPS5 from the plasma membrane to the cytosol and activation of the JNK cascade is mediated by COPS5. Involved in the recruitment of leukocytes to the sites of inflammation and is the major PAR receptor capable of modulating eosinophil function such as pro-inflammatory cytokine secretion, superoxide production and degranulation. During inflammation promotes dendritic cell maturation, trafficking to the lymph nodes and subsequent T-cell activation. Involved in antimicrobial response of innate immune cells; activation enhances phagocytosis of Gram-positive and killing of Gram-negative bacteria. Acts synergistically with interferon-gamma in enhancing antiviral responses. Implicated in a number of acute and chronic inflammatory diseases such as of the joints, lungs, brain, gastrointestinal tract, periodontium, skin, and vascular systems, and in autoimmune disorders. Probably mediates activation of pro-inflammatory and pro-fibrotic responses in fibroblasts, triggered by coagulation factor Xa (F10). Mediates activation of barrier protective signaling responses in endothelial cells, triggered by coagulation factor Xa (F10). In Homo sapiens (Human), this protein is Proteinase-activated receptor 2 (F2RL1).